The sequence spans 128 residues: ADA histone acetyltransferase complex component 2 (128 aa).

The protein localises to the cytoplasm. It localises to the nucleus. The sequence is that of ADA histone acetyltransferase complex component 2 (AHC2) from Saccharomyces cerevisiae (strain ATCC 204508 / S288c) (Baker's yeast).